Here is a 244-residue protein sequence, read N- to C-terminus: High frequency lysogenization protein HflD homolog (244 aa).

This sequence belongs to the HflD family.

Its subcellular location is the cytoplasm. It is found in the cell inner membrane. This Acinetobacter baumannii (strain SDF) protein is High frequency lysogenization protein HflD homolog.